A 326-amino-acid polypeptide reads, in one-letter code: D-alanine--D-alanine ligase (326 aa).

The ATP-grasp domain maps to 114 to 313 (KRVWLQHGLR…YAELCVSIVS (200 aa)). 140 to 195 (PDRLGLPLILKPPHEGSTVGITKVAGYSDMKEGYAQAAKFDDEVLAEQFIAGRELT) is an ATP binding site. Mg(2+)-binding residues include Asp-267, Glu-280, and Asn-282.

Belongs to the D-alanine--D-alanine ligase family. It depends on Mg(2+) as a cofactor. Mn(2+) serves as cofactor.

It localises to the cytoplasm. The enzyme catalyses 2 D-alanine + ATP = D-alanyl-D-alanine + ADP + phosphate + H(+). Its pathway is cell wall biogenesis; peptidoglycan biosynthesis. Cell wall formation. This Bordetella petrii (strain ATCC BAA-461 / DSM 12804 / CCUG 43448) protein is D-alanine--D-alanine ligase.